The sequence spans 318 residues: MTVITIAKRGLPKLTTSTSSTTTASSSSTITSVASSSSSLPLLSNSTSSSIIPSITPPSRNGNPYILDSGDMPNGTVFIVVGGIAGVIFLAILLWWVITTYSSHRLTRSVQDYESKMFSTQHTQFYGDSPYMDYPAKENFQDQVHISESDISPGNKDESVKDALVSHTNNEKPFLSNFERPLFSLASESNRNSLFISPTGDILYKTRLSKLYQESPRLLQKPVIMTSDNVSTNSLVSTISSSSASSLDNGNEKEVGEDIRKPAKIASSPSRKLLNSPESDGSVNRNHSKGNLLVVQSKRKPTPSTYLEHMLEGKEQDE.

A helical membrane pass occupies residues 75–98 (GTVFIVVGGIAGVIFLAILLWWVI). Ser129 carries the post-translational modification Phosphoserine. Positions 238-247 (TISSSSASSL) are enriched in low complexity. The interval 238-318 (TISSSSASSL…HMLEGKEQDE (81 aa)) is disordered. The span at 250–261 (GNEKEVGEDIRK) shows a compositional bias: basic and acidic residues. Polar residues predominate over residues 276–285 (SPESDGSVNR). Phosphoserine is present on residues Ser279, Ser282, and Ser288. A compositionally biased stretch (basic and acidic residues) spans 309–318 (HMLEGKEQDE). Residue Lys314 forms a Glycyl lysine isopeptide (Lys-Gly) (interchain with G-Cter in ubiquitin) linkage.

Belongs to the PRM5 family.

Its subcellular location is the membrane. The protein is Pheromone-regulated membrane protein 5 (PRM5) of Saccharomyces cerevisiae (strain ATCC 204508 / S288c) (Baker's yeast).